The following is a 310-amino-acid chain: B3 domain-containing protein At4g02870 (310 aa).

Positions 1–21 (MTLSDDPISPSTQESSNSSYV) are enriched in polar residues. The segment at 1–39 (MTLSDDPISPSTQESSNSSYVRSKEAEKNSPSQETDEEV) is disordered. Positions 205–300 (RCGRLILQSS…RLQFGVISRN (96 aa)) form a DNA-binding region, TF-B3.

The protein localises to the nucleus. The sequence is that of B3 domain-containing protein At4g02870 (ARF42) from Arabidopsis thaliana (Mouse-ear cress).